The chain runs to 608 residues: Nuclear protein localization protein 4 homolog (608 aa).

At A2 the chain carries N-acetylalanine. Residue K179 is modified to N6-acetyllysine. The 138-residue stretch at 226–363 (IMFENHTVAD…ICRLSPDGHF (138 aa)) folds into the MPN domain. The segment at 580–608 (TSAMWACQHCTFMNQPGTGHCEMCSLPRT) adopts a RanBP2-type zinc-finger fold.

The protein belongs to the NPL4 family. As to quaternary structure, heterodimer with UFD1. The heterodimer binds ubiquitinated proteins. The heterodimer binds to VCP and inhibits Golgi membrane fusion. Interacts with ZFAND2B; probably through VCP.

It localises to the cytoplasm. It is found in the cytosol. Its subcellular location is the endoplasmic reticulum. The protein resides in the nucleus. Its pathway is protein degradation; proteasomal ubiquitin-dependent pathway. In terms of biological role, the ternary complex containing UFD1, VCP and NPLOC4 binds ubiquitinated proteins and is necessary for the export of misfolded proteins from the ER to the cytoplasm, where they are degraded by the proteasome. The NPLOC4-UFD1-VCP complex regulates spindle disassembly at the end of mitosis and is necessary for the formation of a closed nuclear envelope. Acts as a negative regulator of type I interferon production via the complex formed with VCP and UFD1, which binds to RIGI and recruits RNF125 to promote ubiquitination and degradation of RIGI. This chain is Nuclear protein localization protein 4 homolog (Nploc4), found in Mus musculus (Mouse).